Reading from the N-terminus, the 392-residue chain is p21-activated protein kinase-interacting protein 1 (392 aa).

6 WD repeats span residues 33–72 (VADF…MKKK), 73–113 (IEHG…AKKW), 114–155 (ECLK…LVEG), 156–195 (RSAF…LDTA), 196–235 (SISG…CDSL), and 236–275 (VCLC…KMWK). The tract at residues 312 to 392 (SLPPAAEPSP…RKKKKIKTMQ (81 aa)) is disordered. At Ser320 the chain carries Phosphoserine. Residues 325-345 (EQSKIGKKEPGDTVHKEEKRS) are compositionally biased toward basic and acidic residues. Residues 381 to 392 (KKRKKKKIKTMQ) are compositionally biased toward basic residues.

In terms of assembly, interacts with PAK1. As to expression, expressed in brain, colon, heart, kidney, liver, lung, muscle, peripheral blood leukocytes, placenta, small intestine, spleen and thymus.

It localises to the nucleus. It is found in the nucleolus. Functionally, negatively regulates the PAK1 kinase. PAK1 is a member of the PAK kinase family, which has been shown to play a positive role in the regulation of signaling pathways involving MAPK8 and RELA. PAK1 exists as an inactive homodimer, which is activated by binding of small GTPases such as CDC42 to an N-terminal regulatory domain. PAK1IP1 also binds to the N-terminus of PAK1, and inhibits the specific activation of PAK1 by CDC42. May be involved in ribosomal large subunit assembly. This Homo sapiens (Human) protein is p21-activated protein kinase-interacting protein 1 (PAK1IP1).